The primary structure comprises 552 residues: Arginine--tRNA ligase (552 aa).

A 'HIGH' region motif is present at residues 130 to 140; it reads ANPTGPIHLGG.

It belongs to the class-I aminoacyl-tRNA synthetase family. Monomer.

The protein localises to the cytoplasm. It catalyses the reaction tRNA(Arg) + L-arginine + ATP = L-arginyl-tRNA(Arg) + AMP + diphosphate. This is Arginine--tRNA ligase from Nocardia farcinica (strain IFM 10152).